The sequence spans 1139 residues: Dual 3',5'-cyclic-AMP and -GMP phosphodiesterase beta (1139 aa).

2 disordered regions span residues 1–42 and 154–177; these read MGKV…NINK and GISE…STSN. The Cytoplasmic portion of the chain corresponds to 1-429; sequence MGKVEDFEEH…LNLNNWISSR (429 aa). Over residues 9-22 the composition is skewed to basic and acidic residues; sequence EHNKNSNQDIEKNV. A compositionally biased stretch (polar residues) spans 29–42; it reads NSNTINDQNENINK. A helical membrane pass occupies residues 430 to 450; that stretch reads MIIIGIVMLILSFIIWPLTTW. Residues 451–462 are Extracellular-facing; it reads SLKTSTWGRETY. The chain crosses the membrane as a helical span at residues 463-483; it reads IIILFHTLMAINTLILIFFII. Topologically, residues 484 to 498 are cytoplasmic; the sequence is IGSTELCKYSECMSY. Residues 499-519 traverse the membrane as a helical segment; it reads VLFSLMVALWGLWNIAIGLTL. Topologically, residues 520-536 are extracellular; the sequence is EYNPNLSEMPTTTYELE. An N-linked (GlcNAc...) asparagine glycan is attached at N524. A helical membrane pass occupies residues 537–557; it reads MIYVLTYIYGFLPLVIIDIFF. Residues 558–564 are Cytoplasmic-facing; the sequence is PSRTKYN. The chain crosses the membrane as a helical span at residues 565–585; the sequence is WIIHLIFIFLNSSSIILVGSA. The Extracellular segment spans residues 586–592; sequence KPDFVPE. Residues 593–613 traverse the membrane as a helical segment; that stretch reads IYVVFRILAYTTLCIFLYIGS. Over 614-1139 the chain is Cytoplasmic; the sequence is YTSELQIRYV…TLFFIKNVSD (526 aa). In terms of domain architecture, PDEase spans 775-1098; it reads INISQLTKMI…IMWDTLMKEE (324 aa). The Proton donor role is filled by H847. An a nucleoside 3',5'-cyclic phosphate-binding site is contributed by 847–851; it reads HNTIH. 4 residues coordinate a divalent metal cation: H851, H887, D888, and D1000. D888, D1000, and Q1052 together coordinate a nucleoside 3',5'-cyclic phosphate.

The protein belongs to the cyclic nucleotide phosphodiesterase family. It depends on a divalent metal cation as a cofactor.

The protein resides in the cell membrane. The protein localises to the endoplasmic reticulum membrane. The catalysed reaction is 3',5'-cyclic GMP + H2O = GMP + H(+). The enzyme catalyses 3',5'-cyclic AMP + H2O = AMP + H(+). Its pathway is purine metabolism; 3',5'-cyclic GMP degradation; GMP from 3',5'-cyclic GMP: step 1/1. It participates in purine metabolism; 3',5'-cyclic AMP degradation; AMP from 3',5'-cyclic AMP: step 1/1. Its function is as follows. Plays a role in signal transduction by regulating the intracellular concentration of cyclic nucleotides cAMP and cGMP. Catalyzes the hydrolysis of both cAMP and cGMP to 5'-AMP and 5'-GMP, respectively. By regulating cAMP levels during the asexual blood stage and, thus PKA activation, required for merozoite invasion of erythrocytes and for the parasite development immediately following invasion. The chain is Dual 3',5'-cyclic-AMP and -GMP phosphodiesterase beta from Plasmodium falciparum (isolate 3D7).